The sequence spans 344 residues: Ferrochelatase (344 aa).

Residues histidine 214 and glutamate 295 each contribute to the Fe cation site.

This sequence belongs to the ferrochelatase family.

The protein resides in the cytoplasm. It catalyses the reaction heme b + 2 H(+) = protoporphyrin IX + Fe(2+). Its pathway is porphyrin-containing compound metabolism; protoheme biosynthesis; protoheme from protoporphyrin-IX: step 1/1. Functionally, catalyzes the ferrous insertion into protoporphyrin IX. The chain is Ferrochelatase from Rhizobium etli (strain CIAT 652).